Consider the following 652-residue polypeptide: RNA-binding KH domain-containing protein RCF3 (652 aa).

A compositionally biased stretch (basic and acidic residues) spans 1–14; the sequence is MERSRSKRNYHYDQ. A disordered region spans residues 1–63; it reads MERSRSKRNY…NGRPSKSHPE (63 aa). Gly residues predominate over residues 34 to 55; sequence FGGGGGGNNRYRGGGGGGGGNG. 2 KH domains span residues 67 to 139 and 175 to 245; these read TTTY…QEAL and RVVT…LAIV. The interval 253–307 is disordered; that stretch reads QHRDRSNFQGRSHSPERSFAAAGDDYMPQLRRQSSDRFPRGNFRNNNFSSRQSNY. Over residues 292–306 the composition is skewed to low complexity; the sequence is RGNFRNNNFSSRQSN. 3 KH domains span residues 324–391, 408–476, and 576–640; these read ELVF…QEAL, LITT…LVEL, and RSTL…QSLL.

As to quaternary structure, homodimer. Interacts with CPL1. Interacts with RS40 and RS41. Interacts with DRB1/HYL1 and SE. Interacts with CPL2. As to expression, expressed in roots, cotyledons, leaves, flowers and siliques.

It localises to the nucleus. The protein resides in the nucleus speckle. Functionally, acts as a negative regulator of osmotic stress-induced gene expression. Involved in the regulation of thermotolerance responses under heat stress. Functions as an upstream regulator of heat stress transcription factor (HSF) genes. Negatively regulates HSFA1A, HSFA1B and HSFA1D, but positively controls the expression of HSFA1E, HSFA3, HSFA9, HSFB3, and DREB2C. Forms a complex with CPL1 that modulates co-transcriptional processes such as mRNA capping and polyadenylation, and functions to repress stress-inducible gene expression. Regulates pre-mRNA processing under salt stress. Involved in primary miRNA processing and pri-miRNA biogenesis. Binds both intronless and intron-containing pri-miRNAs. Acts as a regulator of biotic stress response gene expression and basal JA-mediated responses involved in defense. Acts as a negative regulator of resistance to the fungal pathogen Fusarium oxysporum. The protein is RNA-binding KH domain-containing protein RCF3 of Arabidopsis thaliana (Mouse-ear cress).